The primary structure comprises 346 residues: NADP-dependent alcohol dehydrogenase C (346 aa).

Residues Cys41, His63, Cys94, Cys97, Cys100, Cys108, and Cys158 each coordinate Zn(2+).

This sequence belongs to the zinc-containing alcohol dehydrogenase family. Zn(2+) serves as cofactor.

It carries out the reaction a primary alcohol + NADP(+) = an aldehyde + NADPH + H(+). The protein is NADP-dependent alcohol dehydrogenase C (adhC) of Mycobacterium bovis (strain ATCC BAA-935 / AF2122/97).